The chain runs to 291 residues: Urease accessory protein UreD (291 aa).

It belongs to the UreD family. As to quaternary structure, ureD, UreF and UreG form a complex that acts as a GTP-hydrolysis-dependent molecular chaperone, activating the urease apoprotein by helping to assemble the nickel containing metallocenter of UreC. The UreE protein probably delivers the nickel.

It is found in the cytoplasm. In terms of biological role, required for maturation of urease via the functional incorporation of the urease nickel metallocenter. This chain is Urease accessory protein UreD, found in Acinetobacter baumannii (strain SDF).